The chain runs to 466 residues: ATP synthase subunit beta (466 aa).

153–160 contributes to the ATP binding site; it reads GGAGVGKT.

This sequence belongs to the ATPase alpha/beta chains family. F-type ATPases have 2 components, CF(1) - the catalytic core - and CF(0) - the membrane proton channel. CF(1) has five subunits: alpha(3), beta(3), gamma(1), delta(1), epsilon(1). CF(0) has three main subunits: a(1), b(2) and c(9-12). The alpha and beta chains form an alternating ring which encloses part of the gamma chain. CF(1) is attached to CF(0) by a central stalk formed by the gamma and epsilon chains, while a peripheral stalk is formed by the delta and b chains.

Its subcellular location is the cell membrane. The catalysed reaction is ATP + H2O + 4 H(+)(in) = ADP + phosphate + 5 H(+)(out). In terms of biological role, produces ATP from ADP in the presence of a proton gradient across the membrane. The catalytic sites are hosted primarily by the beta subunits. In Leuconostoc mesenteroides subsp. mesenteroides (strain ATCC 8293 / DSM 20343 / BCRC 11652 / CCM 1803 / JCM 6124 / NCDO 523 / NBRC 100496 / NCIMB 8023 / NCTC 12954 / NRRL B-1118 / 37Y), this protein is ATP synthase subunit beta.